A 197-amino-acid polypeptide reads, in one-letter code: NADH-quinone oxidoreductase subunit C (197 aa).

This sequence belongs to the complex I 30 kDa subunit family. NDH-1 is composed of 14 different subunits. Subunits NuoB, C, D, E, F, and G constitute the peripheral sector of the complex.

The protein resides in the cell inner membrane. It carries out the reaction a quinone + NADH + 5 H(+)(in) = a quinol + NAD(+) + 4 H(+)(out). In terms of biological role, NDH-1 shuttles electrons from NADH, via FMN and iron-sulfur (Fe-S) centers, to quinones in the respiratory chain. The immediate electron acceptor for the enzyme in this species is believed to be ubiquinone. Couples the redox reaction to proton translocation (for every two electrons transferred, four hydrogen ions are translocated across the cytoplasmic membrane), and thus conserves the redox energy in a proton gradient. The sequence is that of NADH-quinone oxidoreductase subunit C from Neisseria gonorrhoeae (strain ATCC 700825 / FA 1090).